Here is a 541-residue protein sequence, read N- to C-terminus: Chaperonin GroEL (541 aa).

Residues 29-32 (TLGP), 86-90 (DGTTT), G413, 477-479 (DAL), and D493 contribute to the ATP site.

Belongs to the chaperonin (HSP60) family. In terms of assembly, forms a cylinder of 14 subunits composed of two heptameric rings stacked back-to-back. Interacts with the co-chaperonin GroES.

It is found in the cytoplasm. It catalyses the reaction ATP + H2O + a folded polypeptide = ADP + phosphate + an unfolded polypeptide.. Together with its co-chaperonin GroES, plays an essential role in assisting protein folding. The GroEL-GroES system forms a nano-cage that allows encapsulation of the non-native substrate proteins and provides a physical environment optimized to promote and accelerate protein folding. In Clostridium botulinum (strain ATCC 19397 / Type A), this protein is Chaperonin GroEL.